The following is a 232-amino-acid chain: Large ribosomal subunit protein uL1 (232 aa).

Belongs to the universal ribosomal protein uL1 family. In terms of assembly, part of the 50S ribosomal subunit.

Its function is as follows. Binds directly to 23S rRNA. The L1 stalk is quite mobile in the ribosome, and is involved in E site tRNA release. Functionally, protein L1 is also a translational repressor protein, it controls the translation of the L11 operon by binding to its mRNA. The sequence is that of Large ribosomal subunit protein uL1 from Azobacteroides pseudotrichonymphae genomovar. CFP2.